A 183-amino-acid polypeptide reads, in one-letter code: MLILASSSISRANLLKTAKIDFKQVGFDYDENLDKNISPFLYVQKIVLEKEKQFLSALSKDFQNQNLLFADSIVCIDEKILTKAKDKKEAYEMLALQNGKYASILSAFLLVKPEKRVFSLSKTTLYFKNFDENALNDYVENNLYKSKAGCIMCEGFHQNFITQQVGNLSTALGLDIQTLKAYL.

Aspartate 71 functions as the Proton acceptor in the catalytic mechanism.

The protein belongs to the Maf family. A divalent metal cation serves as cofactor.

The protein resides in the cytoplasm. It carries out the reaction a ribonucleoside 5'-triphosphate + H2O = a ribonucleoside 5'-phosphate + diphosphate + H(+). It catalyses the reaction a 2'-deoxyribonucleoside 5'-triphosphate + H2O = a 2'-deoxyribonucleoside 5'-phosphate + diphosphate + H(+). In terms of biological role, nucleoside triphosphate pyrophosphatase. May have a dual role in cell division arrest and in preventing the incorporation of modified nucleotides into cellular nucleic acids. The polypeptide is Nucleoside triphosphate pyrophosphatase (Campylobacter jejuni subsp. doylei (strain ATCC BAA-1458 / RM4099 / 269.97)).